Here is a 261-residue protein sequence, read N- to C-terminus: Proteasome subunit beta type-2 (261 aa).

Residues 1–29 (MAGLSFDNYQRNNFLAENSHTQPKATSTG) constitute a propeptide, removed in mature form. Thr-30 (nucleophile) is an active-site residue.

The protein belongs to the peptidase T1B family. As to quaternary structure, the 26S proteasome consists of a 20S proteasome core and two 19S regulatory subunits. The 20S proteasome core is composed of 28 subunits that are arranged in four stacked rings, resulting in a barrel-shaped structure. The two end rings are each formed by seven alpha subunits, and the two central rings are each formed by seven beta subunits. The catalytic chamber with the active sites is on the inside of the barrel.

The protein resides in the cytoplasm. It is found in the nucleus. The enzyme catalyses Cleavage of peptide bonds with very broad specificity.. Functionally, the proteasome degrades poly-ubiquitinated proteins in the cytoplasm and in the nucleus. It is essential for the regulated turnover of proteins and for the removal of misfolded proteins. The proteasome is a multicatalytic proteinase complex that is characterized by its ability to cleave peptides with Arg, Phe, Tyr, Leu, and Glu adjacent to the leaving group at neutral or slightly basic pH. It has an ATP-dependent proteolytic activity. This chain is Proteasome subunit beta type-2 (PUP1), found in Saccharomyces cerevisiae (strain ATCC 204508 / S288c) (Baker's yeast).